A 62-amino-acid chain; its full sequence is Large ribosomal subunit protein uL30 (62 aa).

It belongs to the universal ribosomal protein uL30 family. In terms of assembly, part of the 50S ribosomal subunit.

The protein is Large ribosomal subunit protein uL30 of Staphylococcus carnosus (strain TM300).